The sequence spans 418 residues: Calreticulin (418 aa).

The signal sequence occupies residues 1 to 17; it reads MLLPVPLLLGLLGLAAA. Positions 18–197 are N-domain; that stretch reads EPVVYFKEQF…NSQVESGSLE (180 aa). Ca(2+) is bound at residue Q26. K48 carries the post-translational modification N6-acetyllysine. Residues K62 and K64 each contribute to the Ca(2+) site. K64 carries the post-translational modification N6-(2-hydroxyisobutyryl)lysine. A disulfide bond links C105 and C137. An alpha-D-glucoside contacts are provided by Y109, K111, Y128, and D135. K159 carries the post-translational modification N6-acetyllysine. Residues 191–202 form a 1-1 repeat; sequence VESGSLEDDWDF. A 4 X approximate repeats region spans residues 191–255; the sequence is VESGSLEDDW…DAKKPEDWDE (65 aa). The tract at residues 193–277 is disordered; sequence SGSLEDDWDF…NPEYKGEWKP (85 aa). Positions 198–308 are P-domain; sequence DDWDFLPPKK…YSPDANIYAY (111 aa). A compositionally biased stretch (basic and acidic residues) spans 207–251; the sequence is KIKDPDASKPEDWDERAKIDDPTDSKPEDWDKPEHIPDPDAKKPE. The residue at position 209 (K209) is an N6-acetyllysine. 6 repeat units span residues 210–221, 227–238, 244–255, 259–269, 273–283, and 287–297. Positions 237-270 are interaction with PPIB; sequence DKPEHIPDPDAKKPEDWDEEMDGEWEPPVIQNPE. Residues 252–261 are compositionally biased toward acidic residues; that stretch reads DWDEEMDGEW. Residues 259-297 are 3 X approximate repeats; it reads GEWEPPVIQNPEYKGEWKPRQIDNPDYKGTWIHPEIDNP. The segment at 309–418 is C-domain; sequence DSFAVLGLDL…AAAGQAKDEL (110 aa). D317 contacts an alpha-D-glucoside. D328 is a Ca(2+) binding site. The segment at 349–418 is disordered; that stretch reads VTKTAEKQMK…AAAGQAKDEL (70 aa). The span at 352-379 shows a compositional bias: basic and acidic residues; it reads TAEKQMKDKQDEEQRLKEEEEEKKRKEE. Over residues 380–409 the composition is skewed to acidic residues; that stretch reads EEAEEDEEDKDDKEDEDEDEEDKDEEEEEA. The short motif at 415-418 is the Prevents secretion from ER element; sequence KDEL.

Belongs to the calreticulin family. In terms of assembly, monomer. Component of an EIF2 complex at least composed of CELF1/CUGBP1, CALR, CALR3, EIF2S1, EIF2S2, HSP90B1 and HSPA5. Interacts with PDIA3/ERp57 and SPACA9. Interacts with TRIM21. Interacts with NR3C1. Interacts with PPIB. Interacts (via P-domain) with PDIA5. Interacts with CLCC1.

It localises to the endoplasmic reticulum lumen. The protein resides in the cytoplasm. Its subcellular location is the cytosol. The protein localises to the secreted. It is found in the extracellular space. It localises to the extracellular matrix. The protein resides in the cell surface. Its subcellular location is the sarcoplasmic reticulum lumen. The protein localises to the cytoplasmic vesicle. It is found in the secretory vesicle. It localises to the cortical granule. The protein resides in the cytolytic granule. Calcium-binding chaperone that promotes folding, oligomeric assembly and quality control in the endoplasmic reticulum (ER) via the calreticulin/calnexin cycle. This lectin interacts transiently with almost all of the monoglucosylated glycoproteins that are synthesized in the ER. Interacts with the DNA-binding domain of NR3C1 and mediates its nuclear export. Involved in maternal gene expression regulation. May participate in oocyte maturation via the regulation of calcium homeostasis. Present in the cortical granules of non-activated oocytes, is exocytosed during the cortical reaction in response to oocyte activation and might participate in the block to polyspermy. The sequence is that of Calreticulin (CALR) from Oryctolagus cuniculus (Rabbit).